A 399-amino-acid chain; its full sequence is Alpha-ketoglutarate-dependent dioxygenase fc-dox (399 aa).

Residues histidine 158 and aspartate 160 each contribute to the Fe cation site. Threonine 203 is a binding site for 2-oxoglutarate. Histidine 355 is a Fe cation binding site. Arginine 367 contributes to the 2-oxoglutarate binding site. Residues 371–399 (QGWLAGDRPPKGPVPIPDPRARSSIYYQK) are disordered.

It belongs to the TfdA dioxygenase family. Fe(2+) is required as a cofactor.

It functions in the pathway mycotoxin biosynthesis. Alpha-ketoglutarate-dependent dioxygenase; part of the 2 gene clusters that mediate the biosynthesis of fusicoccins, diterpene glucosides that display phytohormone-like activity and function as potent activators of plasma membrane H(+)-ATPases in plants by modifying 14-3-3 proteins and cause the plant disease constriction canker. The first step in the pathway is performed by the fusicoccadiene synthase PaFS that possesses both prenyl transferase and terpene cyclase activity, converting isopentenyl diphosphate and dimethylallyl diphosphate into geranylgeranyl diphosphate (GGDP) and successively converting GGDP into fusicocca-2,10(14)-diene, a precursor for fusicoccin H. The second step is the oxidation at the C-8 position by the cytochrome P450 monooxygenase PaP450-2 to yield fusicocca-2,10(14)-diene-8-beta-ol. The cytochrome P450 monooxygenase PaP450-1 then catalyzes the hydroxylation at the C-16 position to produce fusicocca-2,10(14)-diene-8-beta,16-diol. The dioxygenase fc-dox then catalyzes the 16-oxydation of fusicocca-2,10(14)-diene-8-beta,16-diol to yield an aldehyde (8-beta-hydroxyfusicocca-1,10(14)-dien-16-al). The short-chain dehydrogenase/reductase fc-sdr catalyzes the reduction of the aldehyde to yield fusicocca-1,10(14)-diene-8-beta,16-diol. The next step is the hydroxylation at C-9 performed by the cytochrome P450 monooxygenase PaP450-3 that leads to fusicoccin H aglycon which is glycosylated to fusicoccin H by the O-glycosyltransferase PaGT. Hydroxylation at C-12 by the cytochrome P450 monooxygenase PaP450-4 leads then to the production of fusicoccin Q and is followed by methylation by the O-methyltransferase PaMT to yield fusicoccin P. Fusicoccin P is further converted to fusicoccin J via prenylation by the O-glucose prenyltransferase PaPT. Cytochrome P450 monooxygenase PaP450-5 then performs hydroxylation at C-19 to yield dideacetyl-fusicoccin A which is acetylated to 3'-O-deacetyl-fusicoccin A by the O-acetyltransferase PaAT-2. Finally, a another acetylation by the O-acetyltransferase PaAT-1 yields fusicoccin A. This is Alpha-ketoglutarate-dependent dioxygenase fc-dox from Phomopsis amygdali (Fusicoccum amygdali).